We begin with the raw amino-acid sequence, 247 residues long: Chymase (247 aa).

The signal sequence occupies residues 1-19 (MNLHALCLLLLLLGSSTKA). The propeptide at 20–21 (GE) is activation peptide. Residues 22-245 (IIGGTECIPH…YRPWINKILR (224 aa)) enclose the Peptidase S1 domain. A disulfide bridge connects residues Cys51 and Cys67. Catalysis depends on His66, which acts as the Charge relay system. An N-linked (GlcNAc...) asparagine glycan is attached at Asn80. Asp110 functions as the Charge relay system in the catalytic mechanism. Cystine bridges form between Cys144–Cys209 and Cys175–Cys188. The active-site Charge relay system is Ser203.

This sequence belongs to the peptidase S1 family. Granzyme subfamily. As to expression, mast cells.

It localises to the secreted. The protein localises to the cytoplasmic granule. It catalyses the reaction Preferential cleavage: Phe-|-Xaa &gt; Tyr-|-Xaa &gt; Trp-|-Xaa &gt; Leu-|-Xaa.. In terms of biological role, major secreted protease of mast cells with suspected roles in vasoactive peptide generation, extracellular matrix degradation, and regulation of gland secretion. The sequence is that of Chymase (Cma1) from Rattus norvegicus (Rat).